The following is a 472-amino-acid chain: Guanine nucleotide-binding protein alpha-1 subunit (472 aa).

A lipid anchor (N-myristoyl glycine) is attached at G2. C3 is lipidated: S-palmitoyl cysteine. Residues 40–472 form the G-alpha domain; it reads NEIKLLLLGA…QQNLKKIGII (433 aa). The interval 43–56 is G1 motif; sequence KLLLLGAGESGKST. 6 residues coordinate GTP: E51, S52, G53, K54, S55, and T56. A Mg(2+)-binding site is contributed by S55. Residues 127-235 form an insert; not present in other G-proteins region; it reads LDYINASVAG…REIQGQNRRN (109 aa). Residues 162-199 are disordered; that stretch reads GRAKAAFDEDGNISNVKSDTDRDAETVTQNEDADRNNS. Residue K165 forms a Glycyl lysine isopeptide (Lys-Gly) (interchain with G-Cter in ubiquitin) linkage. Residues 292-300 form a G2 motif region; it reads DILKGRIKT. Positions 294, 300, 322, 388, 389, 391, and 444 each coordinate GTP. T300 lines the Mg(2+) pocket. Residues 315-324 form a G3 motif region; the sequence is FKVLDAGGQR. The G4 motif stretch occupies residues 384–391; it reads ILFLNKID. Residues 442–447 are G5 motif; sequence TCATDT.

The protein belongs to the G-alpha family. G(q) subfamily. As to quaternary structure, g proteins are composed of 3 units; alpha, beta and gamma. The alpha chain contains the guanine nucleotide binding site. In its GDP-bound form, binds to the G protein beta-gamma dimer STE4-STE18. Directly interacts with the beta subunit STE4. Probably forms preactivation complexes with unligated receptors STE2 and STE3. Interacts with FUS3. Pheromone-induced activation of GPA1 increases its association with FUS3. Interacts with SCP160. SCP160 binds specifically to the GTP-bound form of GPA1. Interacts with the phosphatidylinositol 3-kinase (PI3K) subunits VPS15 and VPS34 at the endosome. The GTP-bound form of GPA1 binds directly and selectively to the catalytic subunit VPS34, while the GDP-bound form binds to VPS15, which appears to function as an alternative G protein beta subunit for GPA1. Interacts with regulators of G protein signaling (RGS) proteins MDM1, RAX1, RGS2 and SST2, but SST2 alone binds preferentially to the transition state conformation of GPA1, indicating that it acts as a GAP for this G protein. Mg(2+) is required as a cofactor. In terms of processing, N-myristoylation by NMT1 is pheromone-stimulated and required for palmitoylation of Cys-3. This lipid modification anchors the protein to membranes. Depalmitoylated by YLR118C/APT1. Post-translationally, monoubiquitination targets the protein for degradation to the vacuole, and polyubiquitination tags the protein for degradation by the proteasome. This may be an additional signaling regulation mechanism.

Its subcellular location is the cell membrane. The protein localises to the endosome membrane. With respect to regulation, alternates between an inactive form bound to GDP and an active form bound to GTP. Activated by the G protein coupled receptors (GPCRs) STE2 and STE3, which serve as guanine nucleotide-exchange factors (GEFs), and inactivated by SST2, probably acting as a GTPase-activating protein (GAP). In terms of biological role, alpha subunit of the heterotrimeric guanine nucleotide-binding protein (G protein) that mediates mating pheromone signal transduction. Binding of alpha-factor or a-factor to its cognate transmembrane receptor STE2 and STE3, respectively, allows the receptor to serve as a guanine nucleotide exchange factor (GEF) on GPA1. The exchange of GDP for GTP on the G protein alpha subunit alters its interaction with the G protein beta subunit STE4, leading to dissociation of the G protein beta-gamma dimer STE4-STE18. The dissociated subunits activate downstream effectors to activate the mating response pathway and induce changes necessary to produce mating-competent cells. STE4-STE18 activate the downstream pheromone signaling MAP kinase cascade leading to expression of mating-specific genes, inducing cell cycle arrest in G1, promoting polarized cell growth to form mating projections (shmoos), and establishing the changes in plasma membrane, cell wall and nuclear envelope to permit cell-cell fusion (plasmogamy) and fusion of the two haploid nuclei (karyogamy). GPA1 transmits a signal that requires direct binding to the effector enzyme PI3K located at the endosome, promoting increased PI3 production. The intrinsic GTPase activity of GPA1 determines the duration of signaling, and is dramatically accelerated by the RGS protein SST2. In unstimulated cells, GDP-bound GPA1 sequesters the G protein beta-gamma subunit STE4-STE18, preventing it from activating the downstream effectors. Also down-regulates the signal by inhibiting the pheromone-induced accumulation of FUS3 in the nucleus. The protein is Guanine nucleotide-binding protein alpha-1 subunit (GPA1) of Saccharomyces cerevisiae (strain ATCC 204508 / S288c) (Baker's yeast).